The following is a 1961-amino-acid chain: Myosin-9 (1961 aa).

Ala2 bears the N-acetylalanine mark. The tract at residues 2 to 838 (AQQAADKYLY…RLFTKVKPLL (837 aa)) is mediates interaction with LIMCH1. Lys8 is modified (N6-acetyllysine). Tyr11 is subject to Phosphotyrosine. The region spanning 27–77 (GAKKLVWVPSTKNGFEPASLKEEVGEEAIVELVENGKKVKVNKDDIQKMNP) is the Myosin N-terminal SH3-like domain. In terms of domain architecture, Myosin motor spans 81-776 (SKVEDMAELT…VLAHLEEERD (696 aa)). Lys102 carries the post-translational modification N6-acetyllysine. Position 174 to 181 (174 to 181 (GESGAGKT)) interacts with ATP. N6-acetyllysine occurs at positions 299, 435, and 613. Ser628 bears the Phosphoserine mark. The interval 654–676 (LAKLMATLRNTNPNFVCCIIPNH) is actin-binding. Tyr754 carries the post-translational modification Phosphotyrosine. One can recognise an IQ domain in the interval 779–808 (ITDVIIGFQACCRGYLARKAFAKRQQQLTA). Residues 841–1927 (IRHEDELLAK…LKNKLRRGDM (1087 aa)) adopt a coiled-coil conformation. Position 850 is an N6-succinyllysine (Lys850). Residues Lys860, Lys975, and Lys1024 each carry the N6-acetyllysine modification. Over residues 1035–1055 (RLRREEKQRQELEKTRRKLEG) the composition is skewed to basic and acidic residues. The interval 1035–1057 (RLRREEKQRQELEKTRRKLEGDS) is disordered. Phosphoserine is present on Ser1114. Lys1234 and Lys1249 each carry N6-acetyllysine. The tract at residues 1331 to 1353 (LKQMEDEKNSFREQLEEEEEEAK) is disordered. Residues 1332–1344 (KQMEDEKNSFREQ) show a composition bias toward basic and acidic residues. N6-acetyllysine occurs at positions 1358, 1393, 1405, 1411, 1460, and 1639. Lys1670 carries the post-translational modification N6-succinyllysine. At Ser1715 the chain carries Phosphoserine. N6-acetyllysine is present on residues Lys1794, Lys1803, and Lys1846. Residues 1878 to 1910 (RQLEEAEEEAQRANASRRKLQRELEDATETADA) form a disordered region. Position 1924 is an omega-N-methylarginine (Arg1924). Positions 1938 to 1961 (KGTGDCSDEEVDGKADGADAKATE) are disordered. Ser1944 carries the post-translational modification Phosphoserine. A compositionally biased stretch (basic and acidic residues) spans 1949–1961 (DGKADGADAKATE).

Belongs to the TRAFAC class myosin-kinesin ATPase superfamily. Myosin family. In terms of assembly, myosin is a hexameric protein that consists of 2 heavy chain subunits (MHC), 2 alkali light chain subunits (MLC) and 2 regulatory light chain subunits (MLC-2). Interacts with RASIP1. Interacts with DDR1. Interacts with PDLIM2. Interacts with SVIL. Interacts with HTRA3. Interacts with Myo7a. Interacts with CFAP95. Interacts with LIMCH1; independently of the integration of MYH9 into the myosin complex. Interacts with RAB3A. Interacts with ZBED4. Interacts with S100A4; this interaction increases cell motility. ISGylated. Post-translationally, ubiquitination.

Its subcellular location is the cytoplasm. The protein localises to the cytoskeleton. It localises to the cell cortex. The protein resides in the cytoplasmic vesicle. It is found in the secretory vesicle. Its subcellular location is the cortical granule. Its function is as follows. Cellular myosin that appears to play a role in cytokinesis, cell shape, and specialized functions such as secretion and capping. Required for cortical actin clearance prior to oocyte exocytosis. Promotes cell motility in conjunction with S100A4. During cell spreading, plays an important role in cytoskeleton reorganization, focal contact formation (in the margins but not the central part of spreading cells), and lamellipodial retraction; this function is mechanically antagonized by MYH10. The chain is Myosin-9 (Myh9) from Rattus norvegicus (Rat).